A 1249-amino-acid polypeptide reads, in one-letter code: MSEGTNYTPSQQAVIAQQGNNLLVSASAGSGKTTVLIERIMRKILAGTNIDQLLVVTFTNLAAKHMKQKLESQINKRISQLMTDNPAQTTASPAIRQLRQQLNLLGVANISTLDAFCLRVIQRYYYVIDLDPVFRLLTDNTEGLLIRDQVWDSVREQLYDEDGTLFDLLTANFSNDRSDDGLSRLIFRLFDFAQSTPDPEGWLSKLPEPYQVDEEALTASAFYQQQLLPLLINEVDGMQMKLRQAQKVATDADLVPKTLEVLATAQKTLTTLREQLATASWNELRTQVATFKIGALKKTYKDEPEKTARAKTMGTFVDGVKKQMTTLSETYFAADEQQVLDIMVGAKSIVTELVDATKQFKTAFAAEKRRRHVLDFSDLEHLTLQILTSDNESSQAALAQLRAQFEEVMVDEYQDINSLQESILQLLARDQPGNMFMVGDVKQSIYQFRLADPLLFLHKYHDFGTNPEHGERIVLAENFRSVANVDHLTNLIFSQLMDAPVGQIDYDEAAYLKYGPKDYPADMPQTTNLLLYQTETDKSTEDVSTDETNFSIDDPAVGSITMVAQKILALKAQDKPIYERANGEYRPFRYSDVALLVPTRNHNLTIIDVFKRYHIPVVVNDAQNYFQTTEIRIMMALLSIIDNPYQDIPLVAVLRSPIVGLDENQLVYLRIQNKTSDYFQAVQDFYHHYPTGPATEYGDQVYAKIETFLTQLTEFRDLARRNQIVTLIWQIYERTGFLDYVGGMPAGKQRQANLHALYERAYTYEQGSFKGLFQFVRFIRRMQEKDQDLAAAVAETDAEAVNVMTIHGSKGLEYPVIFVMDMDKQFNQTDTRSSALLDREAGIGITYLDPETRVKYPTLPQVVTKQVVSKKMRAEEMRKLYVAMTRAQQQLYLVGTIKDIDTATEKWRQAFASDGRVLSAQARIAATNQLDWVGMAVMRHPAMKAYWGDEWPNYELTDDPTKLAVELGDATTVLAEQSEAVTDTQPDALELVEQQVTIDVDQVTRDYLTTLLNFHYPHQASTTTTAYQSVSEVKRIFEDPDTPLMNANPTVSQRRSRPTSRFVTGSLELPQFLQTTQAPTSAEVGSATHLVLEQLDLTKPVNETTVQSTIDGLVANRVLTTNVAKLIAVDTIVAFYQSALGSQILDNPAKVHREVPFSLLIPARQIFDVDEHETGKVLIHGIIDGYLETADGLTLFDYKTDHVKRPEDLKTRYAGQVKLYAAALASMYPGKVTKQYLYSLPQQVFVPVN.

The UvrD-like helicase ATP-binding domain maps to 5-482 (TNYTPSQQAV…IVLAENFRSV (478 aa)). ATP is bound at residue 26 to 33 (ASAGSGKT). The 291-residue stretch at 521–811 (ADMPQTTNLL…NVMTIHGSKG (291 aa)) folds into the UvrD-like helicase C-terminal domain.

The protein belongs to the helicase family. AddA subfamily. Heterodimer of AddA and AddB/RexB. The cofactor is Mg(2+).

The catalysed reaction is Couples ATP hydrolysis with the unwinding of duplex DNA by translocating in the 3'-5' direction.. It catalyses the reaction ATP + H2O = ADP + phosphate + H(+). In terms of biological role, the heterodimer acts as both an ATP-dependent DNA helicase and an ATP-dependent, dual-direction single-stranded exonuclease. Recognizes the chi site generating a DNA molecule suitable for the initiation of homologous recombination. The AddA nuclease domain is required for chi fragment generation; this subunit has the helicase and 3' -&gt; 5' nuclease activities. The polypeptide is ATP-dependent helicase/nuclease subunit A (Lactiplantibacillus plantarum (strain ATCC BAA-793 / NCIMB 8826 / WCFS1) (Lactobacillus plantarum)).